Consider the following 204-residue polypeptide: Ribonuclease HII (204 aa).

The 190-residue stretch at 14-203 folds into the RNase H type-2 domain; the sequence is VGLCGVDEAG…VRLLLDQTSL (190 aa). Residues D20, E21, and D112 each coordinate a divalent metal cation.

This sequence belongs to the RNase HII family. Mn(2+) is required as a cofactor. The cofactor is Mg(2+).

The protein resides in the cytoplasm. It catalyses the reaction Endonucleolytic cleavage to 5'-phosphomonoester.. Its function is as follows. Endonuclease that specifically degrades the RNA of RNA-DNA hybrids. In Thiobacillus denitrificans (strain ATCC 25259 / T1), this protein is Ribonuclease HII.